The primary structure comprises 564 residues: Eukaryotic translation initiation factor 3 subunit L (564 aa).

One can recognise a PCI domain in the interval 331-537; it reads DAIRVFANIL…IHIADTKVAR (207 aa).

This sequence belongs to the eIF-3 subunit L family. Component of the eukaryotic translation initiation factor 3 (eIF-3) complex, which is composed of 13 subunits: EIF3A, EIF3B, EIF3C, EIF3D, EIF3E, EIF3F, EIF3G, EIF3H, EIF3I, EIF3J, EIF3K, EIF3L and EIF3M.

It is found in the cytoplasm. In terms of biological role, component of the eukaryotic translation initiation factor 3 (eIF-3) complex, which is involved in protein synthesis of a specialized repertoire of mRNAs and, together with other initiation factors, stimulates binding of mRNA and methionyl-tRNAi to the 40S ribosome. The eIF-3 complex specifically targets and initiates translation of a subset of mRNAs involved in cell proliferation. This Gallus gallus (Chicken) protein is Eukaryotic translation initiation factor 3 subunit L.